A 382-amino-acid chain; its full sequence is Galactokinase (382 aa).

34 to 37 (EHTD) contacts substrate. 124–130 (GAGLSSS) is a binding site for ATP. Positions 130 and 162 each coordinate Mg(2+). The active-site Proton acceptor is aspartate 174. A substrate-binding site is contributed by tyrosine 223.

This sequence belongs to the GHMP kinase family. GalK subfamily.

It is found in the cytoplasm. It carries out the reaction alpha-D-galactose + ATP = alpha-D-galactose 1-phosphate + ADP + H(+). It functions in the pathway carbohydrate metabolism; galactose metabolism. Functionally, catalyzes the transfer of the gamma-phosphate of ATP to D-galactose to form alpha-D-galactose-1-phosphate (Gal-1-P). The sequence is that of Galactokinase from Salmonella paratyphi B (strain ATCC BAA-1250 / SPB7).